A 217-amino-acid chain; its full sequence is 3-demethoxyubiquinol 3-hydroxylase (217 aa).

Fe cation-binding residues include E66, E96, H99, E148, E180, and H183.

This sequence belongs to the COQ7 family. The cofactor is Fe cation.

Its subcellular location is the cell membrane. It catalyses the reaction a 5-methoxy-2-methyl-3-(all-trans-polyprenyl)benzene-1,4-diol + AH2 + O2 = a 3-demethylubiquinol + A + H2O. Its pathway is cofactor biosynthesis; ubiquinone biosynthesis. In terms of biological role, catalyzes the hydroxylation of 2-nonaprenyl-3-methyl-6-methoxy-1,4-benzoquinol during ubiquinone biosynthesis. The chain is 3-demethoxyubiquinol 3-hydroxylase from Xanthomonas campestris pv. campestris (strain 8004).